We begin with the raw amino-acid sequence, 55 residues long: Large ribosomal subunit protein bL33 (55 aa).

Belongs to the bacterial ribosomal protein bL33 family.

In Rhodopseudomonas palustris (strain BisA53), this protein is Large ribosomal subunit protein bL33.